Reading from the N-terminus, the 436-residue chain is Tol-Pal system protein TolB (436 aa).

Residues 1-28 form the signal peptide; sequence MRSFLKPLLTIAAMALGMTAVIPMPAWA.

This sequence belongs to the TolB family. The Tol-Pal system is composed of five core proteins: the inner membrane proteins TolA, TolQ and TolR, the periplasmic protein TolB and the outer membrane protein Pal. They form a network linking the inner and outer membranes and the peptidoglycan layer.

The protein resides in the periplasm. In terms of biological role, part of the Tol-Pal system, which plays a role in outer membrane invagination during cell division and is important for maintaining outer membrane integrity. This Mesorhizobium japonicum (strain LMG 29417 / CECT 9101 / MAFF 303099) (Mesorhizobium loti (strain MAFF 303099)) protein is Tol-Pal system protein TolB.